Here is a 370-residue protein sequence, read N- to C-terminus: Holliday junction branch migration complex subunit RuvB 2 (370 aa).

The segment at 1–54 (MAIISSRAAGAEDPGQRQQKSSARRRESKLAFARAEGLLQPQAHPSEAQEESLR) is disordered. The segment at 13–214 (DPGQRQQKSS…FGQVQRLRFY (202 aa)) is large ATPase domain (RuvB-L). ATP-binding positions include leucine 53, arginine 54, glycine 95, lysine 98, threonine 99, threonine 100, 161–163 (EDF), arginine 204, tyrosine 214, and arginine 251. Position 99 (threonine 99) interacts with Mg(2+). Residues 215–285 (EPHELAEIVL…VAAAALELFQ (71 aa)) are small ATPAse domain (RuvB-S). A head domain (RuvB-H) region spans residues 288–370 (PMGLDWTDRK…TAQSPLPVWS (83 aa)). Residues arginine 343 and arginine 348 each coordinate DNA.

Belongs to the RuvB family. In terms of assembly, homohexamer. Forms an RuvA(8)-RuvB(12)-Holliday junction (HJ) complex. HJ DNA is sandwiched between 2 RuvA tetramers; dsDNA enters through RuvA and exits via RuvB. An RuvB hexamer assembles on each DNA strand where it exits the tetramer. Each RuvB hexamer is contacted by two RuvA subunits (via domain III) on 2 adjacent RuvB subunits; this complex drives branch migration. In the full resolvosome a probable DNA-RuvA(4)-RuvB(12)-RuvC(2) complex forms which resolves the HJ.

It is found in the cytoplasm. The enzyme catalyses ATP + H2O = ADP + phosphate + H(+). The RuvA-RuvB-RuvC complex processes Holliday junction (HJ) DNA during genetic recombination and DNA repair, while the RuvA-RuvB complex plays an important role in the rescue of blocked DNA replication forks via replication fork reversal (RFR). RuvA specifically binds to HJ cruciform DNA, conferring on it an open structure. The RuvB hexamer acts as an ATP-dependent pump, pulling dsDNA into and through the RuvAB complex. RuvB forms 2 homohexamers on either side of HJ DNA bound by 1 or 2 RuvA tetramers; 4 subunits per hexamer contact DNA at a time. Coordinated motions by a converter formed by DNA-disengaged RuvB subunits stimulates ATP hydrolysis and nucleotide exchange. Immobilization of the converter enables RuvB to convert the ATP-contained energy into a lever motion, pulling 2 nucleotides of DNA out of the RuvA tetramer per ATP hydrolyzed, thus driving DNA branch migration. The RuvB motors rotate together with the DNA substrate, which together with the progressing nucleotide cycle form the mechanistic basis for DNA recombination by continuous HJ branch migration. Branch migration allows RuvC to scan DNA until it finds its consensus sequence, where it cleaves and resolves cruciform DNA. The protein is Holliday junction branch migration complex subunit RuvB 2 of Synechococcus sp. (strain JA-3-3Ab) (Cyanobacteria bacterium Yellowstone A-Prime).